A 356-amino-acid polypeptide reads, in one-letter code: Histidinol-phosphate aminotransferase (356 aa).

Position 214 is an N6-(pyridoxal phosphate)lysine (K214).

The protein belongs to the class-II pyridoxal-phosphate-dependent aminotransferase family. Histidinol-phosphate aminotransferase subfamily. In terms of assembly, homodimer. Pyridoxal 5'-phosphate is required as a cofactor.

The catalysed reaction is L-histidinol phosphate + 2-oxoglutarate = 3-(imidazol-4-yl)-2-oxopropyl phosphate + L-glutamate. It participates in amino-acid biosynthesis; L-histidine biosynthesis; L-histidine from 5-phospho-alpha-D-ribose 1-diphosphate: step 7/9. The sequence is that of Histidinol-phosphate aminotransferase from Shigella flexneri serotype 5b (strain 8401).